The chain runs to 94 residues: Co-chaperonin GroES (94 aa).

This sequence belongs to the GroES chaperonin family. In terms of assembly, heptamer of 7 subunits arranged in a ring. Interacts with the chaperonin GroEL.

It localises to the cytoplasm. Its function is as follows. Together with the chaperonin GroEL, plays an essential role in assisting protein folding. The GroEL-GroES system forms a nano-cage that allows encapsulation of the non-native substrate proteins and provides a physical environment optimized to promote and accelerate protein folding. GroES binds to the apical surface of the GroEL ring, thereby capping the opening of the GroEL channel. The sequence is that of Co-chaperonin GroES from Streptococcus pneumoniae (strain Taiwan19F-14).